We begin with the raw amino-acid sequence, 134 residues long: Cell division protein SepF (134 aa).

The protein belongs to the SepF family. As to quaternary structure, homodimer. Interacts with FtsZ.

It localises to the cytoplasm. In terms of biological role, cell division protein that is part of the divisome complex and is recruited early to the Z-ring. Probably stimulates Z-ring formation, perhaps through the cross-linking of FtsZ protofilaments. Its function overlaps with FtsA. The protein is Cell division protein SepF of Caldanaerobacter subterraneus subsp. tengcongensis (strain DSM 15242 / JCM 11007 / NBRC 100824 / MB4) (Thermoanaerobacter tengcongensis).